The primary structure comprises 218 residues: Large ribosomal subunit protein uL3 (218 aa).

Residues 127–167 are disordered; that stretch reads GFSRGPMSHGSKNHRLPGSIGAGTTPGRVYPGKRMAGRMGG.

Belongs to the universal ribosomal protein uL3 family. In terms of assembly, part of the 50S ribosomal subunit. Forms a cluster with proteins L14 and L19.

Its function is as follows. One of the primary rRNA binding proteins, it binds directly near the 3'-end of the 23S rRNA, where it nucleates assembly of the 50S subunit. The protein is Large ribosomal subunit protein uL3 of Prochlorococcus marinus (strain NATL1A).